The chain runs to 646 residues: ATP-dependent rRNA helicase SPB4 (646 aa).

The Q motif motif lies at 15-43 (WGALTPSLAPWILDYLSSMGFEQPTPVQK). A Helicase ATP-binding domain is found at 46–247 (FDIFRGNKDV…TVGLLYPHKI (202 aa)). 59 to 66 (AVTGSGKT) is a binding site for ATP. The DEAD box signature appears at 195-198 (DEAD). The Helicase C-terminal domain occupies 284 to 434 (ALCQLLERLE…PLAKPPVSVT (151 aa)). 2 stretches are compositionally biased toward basic and acidic residues: residues 539–548 (KKEKAAREAQ) and 566–581 (NEAW…VKAA). The disordered stretch occupies residues 539 to 646 (KKEKAAREAQ…GGDEFEGFDD (108 aa)). The stretch at 572–623 (KHEHEDVKAARREKKRRKREAQRLGDMTEPEREEQRKLDEMIAEVRRRNAEA) forms a coiled coil. Positions 582–591 (RREKKRRKRE) are enriched in basic residues. The span at 600-621 (EPEREEQRKLDEMIAEVRRRNA) shows a compositional bias: basic and acidic residues. The span at 622-631 (EAPTPAAQAA) shows a compositional bias: low complexity.

This sequence belongs to the DEAD box helicase family. DDX55/SPB4 subfamily. In terms of assembly, component of pre-60S ribosomal complexes.

Its subcellular location is the nucleus. The protein localises to the nucleolus. The enzyme catalyses ATP + H2O = ADP + phosphate + H(+). Functionally, ATP-binding RNA helicase involved in the biogenesis of 60S ribosomal subunits. Binds 90S pre-ribosomal particles and dissociates from pre-60S ribosomal particles after processing of 27SB pre-rRNA. Required for the normal formation of 18S rRNA through the processing of pre-rRNAs at sites A0, A1 and A2, and the normal formation of 25S and 5.8S rRNAs through the processing of pre-rRNAs at sites C1 and C2. The polypeptide is ATP-dependent rRNA helicase SPB4 (Chaetomium globosum (strain ATCC 6205 / CBS 148.51 / DSM 1962 / NBRC 6347 / NRRL 1970) (Soil fungus)).